The following is a 91-amino-acid chain: Elongation factor 1-beta (91 aa).

It belongs to the EF-1-beta/EF-1-delta family.

Functionally, promotes the exchange of GDP for GTP in EF-1-alpha/GDP, thus allowing the regeneration of EF-1-alpha/GTP that could then be used to form the ternary complex EF-1-alpha/GTP/AAtRNA. The sequence is that of Elongation factor 1-beta from Pyrococcus furiosus (strain ATCC 43587 / DSM 3638 / JCM 8422 / Vc1).